The following is a 205-amino-acid chain: uncharacterized protein (205 aa).

Residues 1–82 (MIKVYGVPGW…MVLDRRPDLA (82 aa)) enclose the GST N-terminal domain. Glutathione contacts are provided by residues valine 53 and 66–67 (ET). Residues 86-205 (GRAERQLFQR…QEVLKRNEII (120 aa)) enclose the GST C-terminal domain.

The protein belongs to the GST superfamily. Beta family.

This is an uncharacterized protein from Escherichia coli (strain K12).